Consider the following 406-residue polypeptide: Phosphopentomutase (406 aa).

Mn(2+) is bound by residues D10, D305, H310, D346, H347, and H358.

Belongs to the phosphopentomutase family. The cofactor is Mn(2+).

Its subcellular location is the cytoplasm. The enzyme catalyses 2-deoxy-alpha-D-ribose 1-phosphate = 2-deoxy-D-ribose 5-phosphate. The catalysed reaction is alpha-D-ribose 1-phosphate = D-ribose 5-phosphate. It functions in the pathway carbohydrate degradation; 2-deoxy-D-ribose 1-phosphate degradation; D-glyceraldehyde 3-phosphate and acetaldehyde from 2-deoxy-alpha-D-ribose 1-phosphate: step 1/2. In terms of biological role, isomerase that catalyzes the conversion of deoxy-ribose 1-phosphate (dRib-1-P) and ribose 1-phosphate (Rib-1-P) to deoxy-ribose 5-phosphate (dRib-5-P) and ribose 5-phosphate (Rib-5-P), respectively. This Vibrio vulnificus (strain CMCP6) protein is Phosphopentomutase.